Reading from the N-terminus, the 433-residue chain is GTPase Obg (433 aa).

The Obg domain maps to 1-158 (MFVDQVKIYV…RNVILELKLL (158 aa)). The OBG-type G domain maps to 159-329 (ADVGLVGFPS…LLFAIADLLE (171 aa)). Residues 165-172 (GFPSVGKS), 190-194 (FTTLV), 212-215 (DLPG), 282-285 (NKMD), and 310-312 (SAA) contribute to the GTP site. The Mg(2+) site is built by Ser-172 and Thr-192. The region spanning 350–428 (KYEKEELPFT…LLDYEFEFVD (79 aa)) is the OCT domain.

It belongs to the TRAFAC class OBG-HflX-like GTPase superfamily. OBG GTPase family. In terms of assembly, monomer. It depends on Mg(2+) as a cofactor.

It localises to the cytoplasm. An essential GTPase which binds GTP, GDP and possibly (p)ppGpp with moderate affinity, with high nucleotide exchange rates and a fairly low GTP hydrolysis rate. Plays a role in control of the cell cycle, stress response, ribosome biogenesis and in those bacteria that undergo differentiation, in morphogenesis control. In Geobacillus thermodenitrificans (strain NG80-2), this protein is GTPase Obg.